Consider the following 68-residue polypeptide: Large ribosomal subunit protein bL32 (68 aa).

It belongs to the bacterial ribosomal protein bL32 family.

This chain is Large ribosomal subunit protein bL32, found in Onion yellows phytoplasma (strain OY-M).